The chain runs to 361 residues: UDP-3-O-acylglucosamine N-acyltransferase (361 aa).

H253 acts as the Proton acceptor in catalysis.

This sequence belongs to the transferase hexapeptide repeat family. LpxD subfamily. In terms of assembly, homotrimer.

It catalyses the reaction a UDP-3-O-[(3R)-3-hydroxyacyl]-alpha-D-glucosamine + a (3R)-hydroxyacyl-[ACP] = a UDP-2-N,3-O-bis[(3R)-3-hydroxyacyl]-alpha-D-glucosamine + holo-[ACP] + H(+). It functions in the pathway bacterial outer membrane biogenesis; LPS lipid A biosynthesis. Catalyzes the N-acylation of UDP-3-O-acylglucosamine using 3-hydroxyacyl-ACP as the acyl donor. Is involved in the biosynthesis of lipid A, a phosphorylated glycolipid that anchors the lipopolysaccharide to the outer membrane of the cell. This is UDP-3-O-acylglucosamine N-acyltransferase from Burkholderia mallei (strain ATCC 23344).